A 224-amino-acid chain; its full sequence is UPF0111 protein CPn_0681/CP_0066/CPj0681/CpB0708 (224 aa).

The protein belongs to the UPF0111 family.

The polypeptide is UPF0111 protein CPn_0681/CP_0066/CPj0681/CpB0708 (Chlamydia pneumoniae (Chlamydophila pneumoniae)).